The sequence spans 210 residues: uncharacterized protein (210 aa).

This is an uncharacterized protein from Treponema pallidum (strain Nichols).